The sequence spans 355 residues: Uroporphyrinogen decarboxylase (355 aa).

Residues 27–31 (RQAGR), aspartate 78, tyrosine 155, serine 210, and histidine 328 each bind substrate.

The protein belongs to the uroporphyrinogen decarboxylase family. Homodimer.

The protein resides in the cytoplasm. The catalysed reaction is uroporphyrinogen III + 4 H(+) = coproporphyrinogen III + 4 CO2. The protein operates within porphyrin-containing compound metabolism; protoporphyrin-IX biosynthesis; coproporphyrinogen-III from 5-aminolevulinate: step 4/4. Catalyzes the decarboxylation of four acetate groups of uroporphyrinogen-III to yield coproporphyrinogen-III. In Pseudomonas paraeruginosa (strain DSM 24068 / PA7) (Pseudomonas aeruginosa (strain PA7)), this protein is Uroporphyrinogen decarboxylase.